A 218-amino-acid chain; its full sequence is Riboflavin kinase (218 aa).

The disordered stretch occupies residues 1-27 (MRPDGPRDPVAGPDSGPEPPYPVRLSG). Residues threonine 44 and asparagine 46 each coordinate Mg(2+). Glutamate 120 (nucleophile) is an active-site residue.

The protein belongs to the flavokinase family. Requires Zn(2+) as cofactor. The cofactor is Mg(2+).

It catalyses the reaction riboflavin + ATP = FMN + ADP + H(+). The protein operates within cofactor biosynthesis; FMN biosynthesis; FMN from riboflavin (ATP route): step 1/1. Catalyzes the phosphorylation of riboflavin (vitamin B2) to form flavin mononucleotide (FMN) coenzyme. This chain is Riboflavin kinase (fmn1), found in Neosartorya fischeri (strain ATCC 1020 / DSM 3700 / CBS 544.65 / FGSC A1164 / JCM 1740 / NRRL 181 / WB 181) (Aspergillus fischerianus).